Here is a 141-residue protein sequence, read N- to C-terminus: Large ribosomal subunit protein uL11 (141 aa).

This sequence belongs to the universal ribosomal protein uL11 family. As to quaternary structure, part of the ribosomal stalk of the 50S ribosomal subunit. Interacts with L10 and the large rRNA to form the base of the stalk. L10 forms an elongated spine to which L12 dimers bind in a sequential fashion forming a multimeric L10(L12)X complex. Post-translationally, one or more lysine residues are methylated.

Functionally, forms part of the ribosomal stalk which helps the ribosome interact with GTP-bound translation factors. The protein is Large ribosomal subunit protein uL11 of Chlamydia caviae (strain ATCC VR-813 / DSM 19441 / 03DC25 / GPIC) (Chlamydophila caviae).